Consider the following 99-residue polypeptide: Small ribosomal subunit protein bS20 (99 aa).

Belongs to the bacterial ribosomal protein bS20 family.

Functionally, binds directly to 16S ribosomal RNA. The sequence is that of Small ribosomal subunit protein bS20 from Synechococcus sp. (strain CC9311).